A 353-amino-acid chain; its full sequence is S-adenosylmethionine:tRNA ribosyltransferase-isomerase (353 aa).

The protein belongs to the QueA family. In terms of assembly, monomer.

The protein localises to the cytoplasm. It catalyses the reaction 7-aminomethyl-7-carbaguanosine(34) in tRNA + S-adenosyl-L-methionine = epoxyqueuosine(34) in tRNA + adenine + L-methionine + 2 H(+). It participates in tRNA modification; tRNA-queuosine biosynthesis. Transfers and isomerizes the ribose moiety from AdoMet to the 7-aminomethyl group of 7-deazaguanine (preQ1-tRNA) to give epoxyqueuosine (oQ-tRNA). The sequence is that of S-adenosylmethionine:tRNA ribosyltransferase-isomerase from Marinomonas sp. (strain MWYL1).